We begin with the raw amino-acid sequence, 600 residues long: Potassium-transporting ATPase potassium-binding subunit (600 aa).

The next 11 membrane-spanning stretches (helical) occupy residues 6 to 26 (IILL…LGTY), 65 to 85 (GYAI…YAVQ), 136 to 156 (ALSG…YALI), 179 to 199 (LYVL…QGVI), 283 to 303 (FSNL…CFTF), 314 to 334 (WAIL…VMGA), 367 to 387 (FGIS…CGAV), 419 to 439 (GLYG…LMIG), 458 to 478 (SLVI…AVVL), 523 to 543 (VMLA…VLAI), and 566 to 586 (LFIA…YVPA).

The protein belongs to the KdpA family. The system is composed of three essential subunits: KdpA, KdpB and KdpC.

Its subcellular location is the cell inner membrane. Functionally, part of the high-affinity ATP-driven potassium transport (or Kdp) system, which catalyzes the hydrolysis of ATP coupled with the electrogenic transport of potassium into the cytoplasm. This subunit binds the periplasmic potassium ions and delivers the ions to the membrane domain of KdpB through an intramembrane tunnel. This chain is Potassium-transporting ATPase potassium-binding subunit, found in Janthinobacterium sp. (strain Marseille) (Minibacterium massiliensis).